A 698-amino-acid polypeptide reads, in one-letter code: Probable Xaa-Pro aminopeptidase P (698 aa).

Mn(2+)-binding residues include D509, D520, E604, and E618.

It belongs to the peptidase M24B family. It depends on Mn(2+) as a cofactor.

It catalyses the reaction Release of any N-terminal amino acid, including proline, that is linked to proline, even from a dipeptide or tripeptide.. Catalyzes the removal of a penultimate prolyl residue from the N-termini of peptides. The polypeptide is Probable Xaa-Pro aminopeptidase P (AMPP) (Arthroderma benhamiae (strain ATCC MYA-4681 / CBS 112371) (Trichophyton mentagrophytes)).